Consider the following 534-residue polypeptide: O-phosphoserine--tRNA(Cys) ligase (534 aa).

Substrate is bound by residues 186–188 (HMT), 231–233 (SAS), 273–274 (YY), and Asn325.

Belongs to the class-II aminoacyl-tRNA synthetase family. O-phosphoseryl-tRNA(Cys) synthetase subfamily. As to quaternary structure, homotetramer. Interacts with SepCysS.

It catalyses the reaction tRNA(Cys) + O-phospho-L-serine + ATP = O-phospho-L-seryl-tRNA(Cys) + AMP + diphosphate. Its function is as follows. Catalyzes the attachment of O-phosphoserine (Sep) to tRNA(Cys). The protein is O-phosphoserine--tRNA(Cys) ligase (sepS) of Archaeoglobus fulgidus (strain ATCC 49558 / DSM 4304 / JCM 9628 / NBRC 100126 / VC-16).